The primary structure comprises 121 residues: Protein MGF 110-5L (121 aa).

The first 20 residues, Met-1–Leu-20, serve as a signal peptide directing secretion. Residues Asn-62 and Asn-116 are each glycosylated (N-linked (GlcNAc...) asparagine; by host).

The protein belongs to the asfivirus MGF 110 family.

This African swine fever virus (isolate Portugal/Lis 57/1957) (ASFV) protein is Protein MGF 110-5L.